Here is a 203-residue protein sequence, read N- to C-terminus: Ribonuclease HII (203 aa).

Residues 15-201 form the RNase H type-2 domain; that stretch reads LLVAGLDEAG…VAQAPLRFPE (187 aa). A divalent metal cation contacts are provided by D21, E22, and D111.

Belongs to the RNase HII family. Mn(2+) is required as a cofactor. Requires Mg(2+) as cofactor.

Its subcellular location is the cytoplasm. The catalysed reaction is Endonucleolytic cleavage to 5'-phosphomonoester.. Endonuclease that specifically degrades the RNA of RNA-DNA hybrids. In Thermus thermophilus (strain ATCC BAA-163 / DSM 7039 / HB27), this protein is Ribonuclease HII.